We begin with the raw amino-acid sequence, 274 residues long: Undecaprenyl-diphosphatase 2 (274 aa).

The next 6 helical transmembrane spans lie at 47-64, 82-102, 110-130, 185-205, 219-239, and 249-269; these read VFVIVIQLGAILAVCWEY, WKFVTNLLIAFLPAVVLGLTF, LFSPVPVATAFIVGGLVILWA, ATEFSFFLAIPTLTAASLYDL, LMAVGFVVSFLSALVAVRGLI, and VFAWYRIAFGLVVLATAWSGL.

It belongs to the UppP family.

Its subcellular location is the cell inner membrane. It catalyses the reaction di-trans,octa-cis-undecaprenyl diphosphate + H2O = di-trans,octa-cis-undecaprenyl phosphate + phosphate + H(+). Catalyzes the dephosphorylation of undecaprenyl diphosphate (UPP). Confers resistance to bacitracin. The sequence is that of Undecaprenyl-diphosphatase 2 from Rhodospirillum rubrum (strain ATCC 11170 / ATH 1.1.1 / DSM 467 / LMG 4362 / NCIMB 8255 / S1).